The chain runs to 309 residues: MVKIYAPASIGNVSIGFDVLGAAVTPLDGTLLGDCVSIAASSHFSLHCHGRFVDSLPSTVQENIVYQCWQRFCEVTGRELAVEMVLEKNMPIGSGLGSSACSVVAALAALNRFAGEPLDAHRLLMLMGELEGRISGSVHYDNVAPCYLGGLQLMLEAQEIISQPVPCFDEWLWVMAYPGIKVSTAEARAILPPHYSRGDCVRHGRHLAGFIHACHTRQPSLAAALMQDVIAEPYRCGLLPGFADARRAAGELGALACGISGSGPTLFAVCDDLTAAQAVAQWLAQHYLQNEQGFVHICRLDSAGARQLG.

Residue 91-101 (PIGSGLGSSAC) coordinates ATP.

Belongs to the GHMP kinase family. Homoserine kinase subfamily.

The protein resides in the cytoplasm. It carries out the reaction L-homoserine + ATP = O-phospho-L-homoserine + ADP + H(+). It participates in amino-acid biosynthesis; L-threonine biosynthesis; L-threonine from L-aspartate: step 4/5. Catalyzes the ATP-dependent phosphorylation of L-homoserine to L-homoserine phosphate. In Edwardsiella ictaluri (strain 93-146), this protein is Homoserine kinase.